The chain runs to 188 residues: Large ribosomal subunit protein uL5 (188 aa).

Belongs to the universal ribosomal protein uL5 family. Part of the 50S ribosomal subunit; contacts the 5S rRNA and probably tRNA. Forms a bridge to the 30S subunit in the 70S ribosome.

In terms of biological role, this is one of the proteins that bind and probably mediate the attachment of the 5S RNA into the large ribosomal subunit, where it forms part of the central protuberance. In the 70S ribosome it contacts protein S13 of the 30S subunit (bridge B1b), connecting the 2 subunits; this bridge is implicated in subunit movement. May contact the P site tRNA; the 5S rRNA and some of its associated proteins might help stabilize positioning of ribosome-bound tRNAs. This Pyrococcus abyssi (strain GE5 / Orsay) protein is Large ribosomal subunit protein uL5.